The chain runs to 205 residues: MTPPERLFLPRVRGTTLHLLLLGLLLVLLPGAQGLPGVGLTPSAAQTARQHPKMHLAHSTLKPAAHLIGDPSKQNSLLWRANTDRAFLQDGFSLSNNSLLVPTSGIYFVYSQVVFSGKAYSPKATSSPLYLAHEVQLFSSQYPFHVPLLSSQKMVYPGLQEPWLHSMYHGAAFQLTQGDQLSTHTDGIPHLVLSPSTVFFGAFAL.

The first 34 residues, 1–34 (MTPPERLFLPRVRGTTLHLLLLGLLLVLLPGAQG), serve as a signal peptide directing secretion. An O-linked (GalNAc...) threonine glycan is attached at Thr-41. A THD domain is found at 63 to 205 (PAAHLIGDPS…STVFFGAFAL (143 aa)). Asn-96 carries an N-linked (GlcNAc...) asparagine glycan.

This sequence belongs to the tumor necrosis factor family. In terms of assembly, homotrimer, and heterotrimer of either two LTB and one LTA subunits or (less prevalent) two LTA and one LTB subunits. Interacts with TNFRSF14.

The protein resides in the secreted. Its subcellular location is the membrane. Functionally, cytokine that in its homotrimeric form binds to TNFRSF1A/TNFR1, TNFRSF1B/TNFBR and TNFRSF14/HVEM. In its heterotrimeric form with LTB binds to TNFRSF3/LTBR. Lymphotoxin is produced by lymphocytes and is cytotoxic for a wide range of tumor cells in vitro and in vivo. In Pan troglodytes (Chimpanzee), this protein is Lymphotoxin-alpha (LTA).